The primary structure comprises 292 residues: uncharacterized protein (292 aa).

2 disordered regions span residues 29–50 (SEKPVGAPPASQIPGLSDLRDS) and 166–292 (VKRK…EELK). The residue at position 50 (S50) is a Phosphoserine. 2 stretches are compositionally biased toward polar residues: residues 176-189 (NSKNSSKAGTPVNN) and 208-217 (GSPTNFSKLI). A compositionally biased stretch (basic and acidic residues) spans 221–239 (YKDEWLQQQKADSDRRTPK). 2 stretches are compositionally biased toward polar residues: residues 240-250 (TSEASVSTQST) and 260-270 (DTETPQNSETP).

In terms of processing, phosphorylated upon DNA damage.

This is an uncharacterized protein from Rattus norvegicus (Rat).